We begin with the raw amino-acid sequence, 207 residues long: N-(5'-phosphoribosyl)anthranilate isomerase (207 aa).

The protein belongs to the TrpF family.

The catalysed reaction is N-(5-phospho-beta-D-ribosyl)anthranilate = 1-(2-carboxyphenylamino)-1-deoxy-D-ribulose 5-phosphate. It participates in amino-acid biosynthesis; L-tryptophan biosynthesis; L-tryptophan from chorismate: step 3/5. The sequence is that of N-(5'-phosphoribosyl)anthranilate isomerase from Legionella pneumophila (strain Paris).